The following is a 191-amino-acid chain: Molybdenum cofactor guanylyltransferase (191 aa).

Residues 13–15, K26, D72, and D102 contribute to the GTP site; that span reads LAG. D102 contacts Mg(2+).

The protein belongs to the MobA family. Monomer. The cofactor is Mg(2+).

Its subcellular location is the cytoplasm. The enzyme catalyses Mo-molybdopterin + GTP + H(+) = Mo-molybdopterin guanine dinucleotide + diphosphate. In terms of biological role, transfers a GMP moiety from GTP to Mo-molybdopterin (Mo-MPT) cofactor (Moco or molybdenum cofactor) to form Mo-molybdopterin guanine dinucleotide (Mo-MGD) cofactor. In Pseudomonas putida (strain GB-1), this protein is Molybdenum cofactor guanylyltransferase.